The chain runs to 117 residues: Large ribosomal subunit protein bL20 (117 aa).

Belongs to the bacterial ribosomal protein bL20 family.

Functionally, binds directly to 23S ribosomal RNA and is necessary for the in vitro assembly process of the 50S ribosomal subunit. It is not involved in the protein synthesizing functions of that subunit. In Symbiobacterium thermophilum (strain DSM 24528 / JCM 14929 / IAM 14863 / T), this protein is Large ribosomal subunit protein bL20.